The sequence spans 286 residues: Bifunctional protein FolD (286 aa).

Residues Gly166–Ser168 and Ile232 each bind NADP(+).

This sequence belongs to the tetrahydrofolate dehydrogenase/cyclohydrolase family. As to quaternary structure, homodimer.

It carries out the reaction (6R)-5,10-methylene-5,6,7,8-tetrahydrofolate + NADP(+) = (6R)-5,10-methenyltetrahydrofolate + NADPH. The enzyme catalyses (6R)-5,10-methenyltetrahydrofolate + H2O = (6R)-10-formyltetrahydrofolate + H(+). It participates in one-carbon metabolism; tetrahydrofolate interconversion. In terms of biological role, catalyzes the oxidation of 5,10-methylenetetrahydrofolate to 5,10-methenyltetrahydrofolate and then the hydrolysis of 5,10-methenyltetrahydrofolate to 10-formyltetrahydrofolate. This Shewanella woodyi (strain ATCC 51908 / MS32) protein is Bifunctional protein FolD.